Reading from the N-terminus, the 428-residue chain is Adenosylmethionine-8-amino-7-oxononanoate aminotransferase (428 aa).

Position 52 (W52) interacts with substrate. Pyridoxal 5'-phosphate is bound at residue 112–113 (GS). Y144 serves as a coordination point for substrate. D245 provides a ligand contact to pyridoxal 5'-phosphate. 2 residues coordinate substrate: K274 and G307. Residue K274 is modified to N6-(pyridoxal phosphate)lysine. Residue 308 to 309 (PT) participates in pyridoxal 5'-phosphate binding. R391 provides a ligand contact to substrate.

Belongs to the class-III pyridoxal-phosphate-dependent aminotransferase family. BioA subfamily. As to quaternary structure, homodimer. Pyridoxal 5'-phosphate serves as cofactor.

The protein localises to the cytoplasm. The catalysed reaction is (8S)-8-amino-7-oxononanoate + S-adenosyl-L-methionine = S-adenosyl-4-methylsulfanyl-2-oxobutanoate + (7R,8S)-7,8-diammoniononanoate. Its pathway is cofactor biosynthesis; biotin biosynthesis; 7,8-diaminononanoate from 8-amino-7-oxononanoate (SAM route): step 1/1. Its function is as follows. Catalyzes the transfer of the alpha-amino group from S-adenosyl-L-methionine (SAM) to 7-keto-8-aminopelargonic acid (KAPA) to form 7,8-diaminopelargonic acid (DAPA). It is the only aminotransferase known to utilize SAM as an amino donor. In Buchnera aphidicola subsp. Acyrthosiphon pisum (strain APS) (Acyrthosiphon pisum symbiotic bacterium), this protein is Adenosylmethionine-8-amino-7-oxononanoate aminotransferase.